The following is a 203-amino-acid chain: Urease accessory protein UreE (203 aa).

Positions 170-190 (EHHGHSHSRSHDHDHDHDHQH) are enriched in basic and acidic residues. Residues 170–203 (EHHGHSHSRSHDHDHDHDHQHGPSCSHGHHHGHR) are disordered.

This sequence belongs to the UreE family.

The protein localises to the cytoplasm. Involved in urease metallocenter assembly. Binds nickel. Probably functions as a nickel donor during metallocenter assembly. The sequence is that of Urease accessory protein UreE from Burkholderia pseudomallei (strain 1710b).